The chain runs to 387 residues: Phosphoglycerate kinase (387 aa).

Residues 21–23 (DLN), Arg36, 59–62 (HLGR), Arg113, and Arg146 each bind substrate. Residues Lys197, Glu314, and 340–343 (GGDT) each bind ATP.

Belongs to the phosphoglycerate kinase family. Monomer.

Its subcellular location is the cytoplasm. The catalysed reaction is (2R)-3-phosphoglycerate + ATP = (2R)-3-phospho-glyceroyl phosphate + ADP. Its pathway is carbohydrate degradation; glycolysis; pyruvate from D-glyceraldehyde 3-phosphate: step 2/5. The chain is Phosphoglycerate kinase from Pseudomonas fluorescens (strain SBW25).